We begin with the raw amino-acid sequence, 166 residues long: NADPH-dependent 7-cyano-7-deazaguanine reductase (166 aa).

The active-site Thioimide intermediate is cysteine 57. The active-site Proton donor is aspartate 64. Residues 79–81 (VES) and 98–99 (HE) each bind substrate.

It belongs to the GTP cyclohydrolase I family. QueF type 1 subfamily.

Its subcellular location is the cytoplasm. The enzyme catalyses 7-aminomethyl-7-carbaguanine + 2 NADP(+) = 7-cyano-7-deazaguanine + 2 NADPH + 3 H(+). The protein operates within tRNA modification; tRNA-queuosine biosynthesis. Catalyzes the NADPH-dependent reduction of 7-cyano-7-deazaguanine (preQ0) to 7-aminomethyl-7-deazaguanine (preQ1). The protein is NADPH-dependent 7-cyano-7-deazaguanine reductase of Staphylococcus epidermidis (strain ATCC 35984 / DSM 28319 / BCRC 17069 / CCUG 31568 / BM 3577 / RP62A).